A 274-amino-acid chain; its full sequence is Sulfur carrier protein FdhD (274 aa).

Cys121 functions as the Cysteine persulfide intermediate in the catalytic mechanism. Residue 258 to 263 participates in Mo-bis(molybdopterin guanine dinucleotide) binding; the sequence is FSKPGR.

This sequence belongs to the FdhD family.

Its subcellular location is the cytoplasm. In terms of biological role, required for formate dehydrogenase (FDH) activity. Acts as a sulfur carrier protein that transfers sulfur from IscS to the molybdenum cofactor prior to its insertion into FDH. This is Sulfur carrier protein FdhD from Yersinia pseudotuberculosis serotype O:1b (strain IP 31758).